The chain runs to 644 residues: Exoribonuclease 2 (644 aa).

The RNB domain occupies 189 to 516 (RRDLTALDFV…NHRLLKAIIK (328 aa)). The region spanning 561 to 643 (DTRFAAEILD…ETRSIIARPA (83 aa)) is the S1 motif domain.

The protein belongs to the RNR ribonuclease family. RNase II subfamily.

Its subcellular location is the cytoplasm. The enzyme catalyses Exonucleolytic cleavage in the 3'- to 5'-direction to yield nucleoside 5'-phosphates.. Its function is as follows. Involved in mRNA degradation. Hydrolyzes single-stranded polyribonucleotides processively in the 3' to 5' direction. The chain is Exoribonuclease 2 from Klebsiella pneumoniae (strain 342).